A 474-amino-acid polypeptide reads, in one-letter code: Sestrin homolog (474 aa).

It belongs to the sestrin family.

Its subcellular location is the nucleus. The protein localises to the cytoplasm. May function as a negative feedback regulator of TOR function. This chain is Sestrin homolog, found in Caenorhabditis elegans.